We begin with the raw amino-acid sequence, 353 residues long: DNA-repair protein XRCC1 (353 aa).

The span at 1 to 12 (MSQKRNLPSWMS) shows a compositional bias: polar residues. Residues 1 to 57 (MSQKRNLPSWMSSRDPEITPSKSHCKKPKDEGPTEEHNSRNAPSNKSEHAEPSSNTT) form a disordered region. Basic and acidic residues predominate over residues 28–39 (PKDEGPTEEHNS). One can recognise a BRCT 1 domain in the interval 58 to 146 (EFSKLMEGVV…KLVDIEQYLM (89 aa)). The tract at residues 150–194 (KPWRKSSSPQDANREKREHLSKKPEKQVEKKTETRGTPSTSSKNR) is disordered. The segment covering 161 to 183 (ANREKREHLSKKPEKQVEKKTET) has biased composition (basic and acidic residues). Residues 184-194 (RGTPSTSSKNR) are compositionally biased toward polar residues. A coiled-coil region spans residues 240-260 (AAEGVLTCLQDAIDSLEQKQD). The region spanning 266 to 347 (ELWSFVPRVV…EEEIELAYRN (82 aa)) is the BRCT 2 domain.

Homodimer. Interacts with polynucleotide kinase (PNK), DNA polymerase-beta (POLB) and DNA ligase III (LIG3). Interacts with ZDP and ROS1. Binds to various forms of double-stranded DNA (e.g. methylated, unmethylated, with single-nucleotide gap flanked by 3'-phosphate or 5'-phosphate ends).

The protein resides in the nucleus. In terms of biological role, corrects defective DNA strand-break repair and sister chromatid exchange following treatment with ionizing radiation and alkylating agents. Involved in DNA demethylation pathway by stimulating cytosine methylation (5-meC) excision, gap tailoring, and DNA ligation. In Arabidopsis thaliana (Mouse-ear cress), this protein is DNA-repair protein XRCC1.